A 310-amino-acid chain; its full sequence is Cell division protein FtsQ (310 aa).

The tract at residues Met-1–Ala-57 is disordered. Residues Met-1–Gln-95 lie on the Cytoplasmic side of the membrane. The chain crosses the membrane as a helical span at residues Thr-96–Phe-116. Residues Thr-117 to Lys-310 lie on the Extracellular side of the membrane. In terms of domain architecture, POTRA spans Met-120–Arg-188.

This sequence belongs to the FtsQ/DivIB family. FtsQ subfamily.

Its subcellular location is the cell membrane. In terms of biological role, essential cell division protein. This is Cell division protein FtsQ from Mycobacteroides abscessus (strain ATCC 19977 / DSM 44196 / CCUG 20993 / CIP 104536 / JCM 13569 / NCTC 13031 / TMC 1543 / L948) (Mycobacterium abscessus).